The sequence spans 168 residues: Heat shock protein beta-9 (168 aa).

Polar residues predominate over residues 1-12; the sequence is MQRVGSSFSTGQ. Disordered stretches follow at residues 1-25, 83-104, and 129-168; these read MQRV…SRCP, TGQR…EQSV, and LWLR…VKNP. The sHSP domain maps to 38 to 151; the sequence is LPVRLLRDEV…EAQTGQSQKP (114 aa). Basic and acidic residues predominate over residues 86 to 104; the sequence is RQHESNDPSRGRYRMEQSV. Polar residues predominate over residues 158–168; it reads SSLQNESVKNP.

The protein belongs to the small heat shock protein (HSP20) family. As to expression, testis specific.

Its subcellular location is the cytoplasm. The protein localises to the nucleus. The sequence is that of Heat shock protein beta-9 (Hspb9) from Mus musculus (Mouse).